The sequence spans 365 residues: 3-dehydroquinate synthase (365 aa).

NAD(+) is bound by residues 69–74 (DGEAHK), 103–107 (GVIGD), 127–128 (TT), K140, K149, and 167–170 (TLNT). Residues E182, H245, and H262 each coordinate Zn(2+).

This sequence belongs to the sugar phosphate cyclases superfamily. Dehydroquinate synthase family. The cofactor is Co(2+). It depends on Zn(2+) as a cofactor. Requires NAD(+) as cofactor.

Its subcellular location is the cytoplasm. It catalyses the reaction 7-phospho-2-dehydro-3-deoxy-D-arabino-heptonate = 3-dehydroquinate + phosphate. Its pathway is metabolic intermediate biosynthesis; chorismate biosynthesis; chorismate from D-erythrose 4-phosphate and phosphoenolpyruvate: step 2/7. Functionally, catalyzes the conversion of 3-deoxy-D-arabino-heptulosonate 7-phosphate (DAHP) to dehydroquinate (DHQ). In Pseudomonas putida (strain W619), this protein is 3-dehydroquinate synthase.